The primary structure comprises 131 residues: Calvin cycle protein CP12-2, chloroplastic (131 aa).

The transit peptide at 1 to 53 (MATIATGLNIATQRVFVTSENRPVCLAGPVHLNNSWNLGSRTTNRMMKLQPIK) directs the protein to the chloroplast. Intrachain disulfides connect C75/C84 and C117/C126. Residues 97–131 (AASHARDKKKADGSDPLEEYCKDNPETNECRTYDN) are disordered. Basic and acidic residues predominate over residues 105–131 (KKADGSDPLEEYCKDNPETNECRTYDN).

Belongs to the CP12 family. In terms of assembly, monomer. Component of a complex that contains two dimers of PRK, two tetramers of GAPDH and CP12. CP12 associates with GAPDH, causing its conformation to change. This GAPDH/CP12 complex binds PRK to form a half-complex (one unit). This unit probably dimerizes due partially to interactions between the enzymes of each unit. Post-translationally, contains two disulfide bonds; only the oxidized protein, with two disulfide bonds, is active in complex formation. The C-terminal disulfide is involved in the interaction with GAPDH and the N-terminal disulfide mediates the binding of PRK with this binary complex. As to expression, mostly expressed in cotyledons, leaves and flower stalks, and, to a lower extent, in flowers and stems. Barely detectable in roots and siliques.

The protein resides in the plastid. It localises to the chloroplast. Acts as a linker essential in the assembly of a core complex of PRK/GAPDH. Coordinates the reversible inactivation of chloroplast enzymes GAPDH and PRK during darkness in photosynthetic tissues. This chain is Calvin cycle protein CP12-2, chloroplastic (CP12-2), found in Arabidopsis thaliana (Mouse-ear cress).